A 1001-amino-acid chain; its full sequence is Ankyrin repeat domain-containing protein 35 (1001 aa).

6 ANK repeats span residues 53–82, 86–115, 119–148, 152–181, 185–214, and 218–247; these read NGQS…DINS, DGST…NEDA, ENRS…FLDV, DGRT…RVNV, NDKS…DAGA, and TGHD…RRRR. Disordered stretches follow at residues 256-296, 352-482, and 559-601; these read PDLA…PCSE, PRAS…VAEP, and PEVP…ALGG. Positions 281–295 are enriched in acidic residues; it reads PEEEQEEKEDEDPCS. Positions 295 to 344 form a coiled coil; sequence SEEWRWKYEEERRKVVRLEQELVQKTEECKTQAAAYLDLENQIREQAQEL. The segment covering 402–422 has biased composition (basic and acidic residues); that stretch reads KKAEDSAPGKIQYEVHGRSQP. A compositionally biased stretch (low complexity) spans 423–434; it reads EEQGPPQSPASE. A compositionally biased stretch (polar residues) spans 440–450; sequence TGQQLTTNGAQ. A compositionally biased stretch (basic and acidic residues) spans 579–588; that stretch reads KQDEEKEKRV. 3 coiled-coil regions span residues 610–696, 733–810, and 851–968; these read KGQL…LLAS, ISTL…IGKL, and QELK…HEEI. The segment at 879–902 is disordered; sequence RRSGDLAAQAAEQERQASEMRGRS. The span at 890-902 shows a compositional bias: basic and acidic residues; it reads EQERQASEMRGRS.

In Homo sapiens (Human), this protein is Ankyrin repeat domain-containing protein 35 (ANKRD35).